We begin with the raw amino-acid sequence, 279 residues long: Tryptophan synthase alpha chain (279 aa).

Residues E50 and D61 each act as proton acceptor in the active site.

This sequence belongs to the TrpA family. In terms of assembly, tetramer of two alpha and two beta chains.

The enzyme catalyses (1S,2R)-1-C-(indol-3-yl)glycerol 3-phosphate + L-serine = D-glyceraldehyde 3-phosphate + L-tryptophan + H2O. The protein operates within amino-acid biosynthesis; L-tryptophan biosynthesis; L-tryptophan from chorismate: step 5/5. The alpha subunit is responsible for the aldol cleavage of indoleglycerol phosphate to indole and glyceraldehyde 3-phosphate. The chain is Tryptophan synthase alpha chain from Sinorhizobium fredii (strain NBRC 101917 / NGR234).